A 313-amino-acid chain; its full sequence is Probable cell division protein WhiA (313 aa).

The H-T-H motif DNA-binding region spans 277–311; the sequence is SLKEVAAQVPDGPISKSGVNHRFQKIREIAKQLKE.

Belongs to the WhiA family.

Functionally, involved in cell division and chromosome segregation. The chain is Probable cell division protein WhiA from Lactobacillus johnsonii (strain CNCM I-12250 / La1 / NCC 533).